The primary structure comprises 135 residues: Hemoglobin subunit alpha (135 aa).

Positions 1-135 (AAVVALWGKI…VALALAERYK (135 aa)) constitute a Globin domain. His-52 is a binding site for O2. His-81 contacts heme b.

It belongs to the globin family. In terms of assembly, hb1 is a heterotetramer of two alpha chains and two beta-1 chains. Hb2 is a heterotetramer of two alpha chains and two beta-2 chains. Post-translationally, the N-terminus is blocked. In terms of tissue distribution, red blood cells.

In terms of biological role, involved in oxygen transport from gills to the various peripheral tissues. The sequence is that of Hemoglobin subunit alpha from Dissostichus eleginoides (Patagonian toothfish).